Consider the following 874-residue polypeptide: Leucine--tRNA ligase (874 aa).

The short motif at 43–53 (PYPSGRIHIGH) is the 'HIGH' region element. The tract at residues 614 to 634 (LDDGSPVTVGPPEKMSKSKKN) is disordered. Residues 627–631 (KMSKS) carry the 'KMSKS' region motif. Lys630 provides a ligand contact to ATP.

It belongs to the class-I aminoacyl-tRNA synthetase family.

The protein localises to the cytoplasm. The enzyme catalyses tRNA(Leu) + L-leucine + ATP = L-leucyl-tRNA(Leu) + AMP + diphosphate. This chain is Leucine--tRNA ligase, found in Azorhizobium caulinodans (strain ATCC 43989 / DSM 5975 / JCM 20966 / LMG 6465 / NBRC 14845 / NCIMB 13405 / ORS 571).